Reading from the N-terminus, the 1405-residue chain is DNA-directed RNA polymerase subunit beta' (1405 aa).

Residues cysteine 70, cysteine 72, cysteine 85, and cysteine 88 each contribute to the Zn(2+) site. Aspartate 460, aspartate 462, and aspartate 464 together coordinate Mg(2+). Cysteine 814, cysteine 888, cysteine 895, and cysteine 898 together coordinate Zn(2+).

It belongs to the RNA polymerase beta' chain family. The RNAP catalytic core consists of 2 alpha, 1 beta, 1 beta' and 1 omega subunit. When a sigma factor is associated with the core the holoenzyme is formed, which can initiate transcription. Mg(2+) serves as cofactor. The cofactor is Zn(2+).

The catalysed reaction is RNA(n) + a ribonucleoside 5'-triphosphate = RNA(n+1) + diphosphate. In terms of biological role, DNA-dependent RNA polymerase catalyzes the transcription of DNA into RNA using the four ribonucleoside triphosphates as substrates. The chain is DNA-directed RNA polymerase subunit beta' from Shewanella sp. (strain MR-7).